Here is a 316-residue protein sequence, read N- to C-terminus: 4-hydroxy-3-methylbut-2-enyl diphosphate reductase (316 aa).

Cysteine 12 is a binding site for [4Fe-4S] cluster. 2 residues coordinate (2E)-4-hydroxy-3-methylbut-2-enyl diphosphate: histidine 41 and histidine 74. Residues histidine 41 and histidine 74 each coordinate dimethylallyl diphosphate. Positions 41 and 74 each coordinate isopentenyl diphosphate. Cysteine 96 provides a ligand contact to [4Fe-4S] cluster. Position 124 (histidine 124) interacts with (2E)-4-hydroxy-3-methylbut-2-enyl diphosphate. Histidine 124 contacts dimethylallyl diphosphate. Histidine 124 serves as a coordination point for isopentenyl diphosphate. Residue glutamate 126 is the Proton donor of the active site. Threonine 169 contributes to the (2E)-4-hydroxy-3-methylbut-2-enyl diphosphate binding site. Residue cysteine 199 coordinates [4Fe-4S] cluster. 4 residues coordinate (2E)-4-hydroxy-3-methylbut-2-enyl diphosphate: serine 227, serine 228, asparagine 229, and serine 271. Dimethylallyl diphosphate-binding residues include serine 227, serine 228, asparagine 229, and serine 271. Positions 227, 228, 229, and 271 each coordinate isopentenyl diphosphate.

Belongs to the IspH family. [4Fe-4S] cluster serves as cofactor.

It catalyses the reaction isopentenyl diphosphate + 2 oxidized [2Fe-2S]-[ferredoxin] + H2O = (2E)-4-hydroxy-3-methylbut-2-enyl diphosphate + 2 reduced [2Fe-2S]-[ferredoxin] + 2 H(+). The enzyme catalyses dimethylallyl diphosphate + 2 oxidized [2Fe-2S]-[ferredoxin] + H2O = (2E)-4-hydroxy-3-methylbut-2-enyl diphosphate + 2 reduced [2Fe-2S]-[ferredoxin] + 2 H(+). It functions in the pathway isoprenoid biosynthesis; dimethylallyl diphosphate biosynthesis; dimethylallyl diphosphate from (2E)-4-hydroxy-3-methylbutenyl diphosphate: step 1/1. Its pathway is isoprenoid biosynthesis; isopentenyl diphosphate biosynthesis via DXP pathway; isopentenyl diphosphate from 1-deoxy-D-xylulose 5-phosphate: step 6/6. Its function is as follows. Catalyzes the conversion of 1-hydroxy-2-methyl-2-(E)-butenyl 4-diphosphate (HMBPP) into a mixture of isopentenyl diphosphate (IPP) and dimethylallyl diphosphate (DMAPP). Acts in the terminal step of the DOXP/MEP pathway for isoprenoid precursor biosynthesis. The sequence is that of 4-hydroxy-3-methylbut-2-enyl diphosphate reductase from Xanthomonas campestris pv. campestris (strain ATCC 33913 / DSM 3586 / NCPPB 528 / LMG 568 / P 25).